A 394-amino-acid polypeptide reads, in one-letter code: MLEQQTCAEKAANTVNTVELSTDQAKKINLMNLTRQQMREFFKELGEKPFRADQLVKWIYHFGEDNFDNMTNINKKLRDKLKQVAEIKAPEVAVEQRSADGTIKWAMQVGDQQVETVYIPEADRATLCVSSQVGCALACTFCSTAQQGFNRNLTVSEIIGQVWRASKIIGNFGVTGVRPITNVVMMGMGEPLLNVANVVPAMEIMLDDFAYGLSKRRVTLSTSGVVPALDKLSEMIDVALAISLHAPNDELRDEIVPINKKYNIKMLMDSVNRYLSVSNANHGKVTIEYVMLDHVNDGVEHAHQLAQVLKNTPCKINLIPWNPFPEAPYAKSSNSRIDRFQKTLMEYGFTVIVRKTRGDDIDAACGQLAGDVIDRTKRTAQKKQFGQEIAVRNH.

Residue Glu115 is the Proton acceptor of the active site. One can recognise a Radical SAM core domain in the interval 121–360 (EADRATLCVS…VIVRKTRGDD (240 aa)). A disulfide bond links Cys128 and Cys365. [4Fe-4S] cluster contacts are provided by Cys135, Cys139, and Cys142. Residues 189–190 (GE), Ser221, 243–245 (SLH), and Asn322 contribute to the S-adenosyl-L-methionine site. Catalysis depends on Cys365, which acts as the S-methylcysteine intermediate.

It belongs to the radical SAM superfamily. RlmN family. [4Fe-4S] cluster is required as a cofactor.

It is found in the cytoplasm. The catalysed reaction is adenosine(2503) in 23S rRNA + 2 reduced [2Fe-2S]-[ferredoxin] + 2 S-adenosyl-L-methionine = 2-methyladenosine(2503) in 23S rRNA + 5'-deoxyadenosine + L-methionine + 2 oxidized [2Fe-2S]-[ferredoxin] + S-adenosyl-L-homocysteine. It catalyses the reaction adenosine(37) in tRNA + 2 reduced [2Fe-2S]-[ferredoxin] + 2 S-adenosyl-L-methionine = 2-methyladenosine(37) in tRNA + 5'-deoxyadenosine + L-methionine + 2 oxidized [2Fe-2S]-[ferredoxin] + S-adenosyl-L-homocysteine. Its function is as follows. Specifically methylates position 2 of adenine 2503 in 23S rRNA and position 2 of adenine 37 in tRNAs. m2A2503 modification seems to play a crucial role in the proofreading step occurring at the peptidyl transferase center and thus would serve to optimize ribosomal fidelity. The chain is Dual-specificity RNA methyltransferase RlmN from Pasteurella multocida (strain Pm70).